The sequence spans 212 residues: Glycerol-3-phosphate acyltransferase (212 aa).

4 helical membrane passes run 3-23 (ILLAALVAYLIGSVSFAVVVS), 78-98 (DVAVAWVAIAVFLGHLYPVFF), 115-135 (AVHPVLGLATALTWLIVAFFF), and 155-177 (FLFGTGHNPVAWAVLAMSVLLVW).

The protein belongs to the PlsY family. In terms of assembly, probably interacts with PlsX.

Its subcellular location is the cell inner membrane. The enzyme catalyses an acyl phosphate + sn-glycerol 3-phosphate = a 1-acyl-sn-glycero-3-phosphate + phosphate. It participates in lipid metabolism; phospholipid metabolism. Its function is as follows. Catalyzes the transfer of an acyl group from acyl-phosphate (acyl-PO(4)) to glycerol-3-phosphate (G3P) to form lysophosphatidic acid (LPA). This enzyme utilizes acyl-phosphate as fatty acyl donor, but not acyl-CoA or acyl-ACP. This Burkholderia lata (strain ATCC 17760 / DSM 23089 / LMG 22485 / NCIMB 9086 / R18194 / 383) protein is Glycerol-3-phosphate acyltransferase.